We begin with the raw amino-acid sequence, 711 residues long: 1,4-alpha-glucan-branching enzyme (711 aa).

W98 and K135 together coordinate (1,4-alpha-D-glucosyl)n. The Nucleophile role is filled by D353. The active-site Proton donor is E414.

It belongs to the glycosyl hydrolase 13 family. GlgB subfamily.

Its subcellular location is the cytoplasm. It carries out the reaction Transfers a segment of a (1-&gt;4)-alpha-D-glucan chain to a primary hydroxy group in a similar glucan chain.. Its pathway is glycan biosynthesis; glycogen biosynthesis. Functionally, glycogen-branching enzyme participates in the glycogen biosynthetic process along with glycogenin and glycogen synthase. Generates alpha-1,6-glucosidic branches from alpha-1,4-linked glucose chains, to increase solubility of the glycogen polymer. In Debaryomyces hansenii (strain ATCC 36239 / CBS 767 / BCRC 21394 / JCM 1990 / NBRC 0083 / IGC 2968) (Yeast), this protein is 1,4-alpha-glucan-branching enzyme (GLC3).